The sequence spans 378 residues: Probable cytochrome oxidase subunit 2 (378 aa).

Residues 1–8 (MIDYEFLR) are Cytoplasmic-facing. Residues 9–28 (FIWWVLVIVLLIGFSVTDGF) form a helical membrane-spanning segment. The Periplasmic portion of the chain corresponds to 29–79 (DMGVTALLPVIGKKEVERRIMINTIAPHWDGNQVWLLTAGGAIFAAWPIVY). The helical transmembrane segment at 80–99 (AVSFSGFYIALVLVLAALFL) threads the bilayer. At 100 to 122 (RPLGFEYRAKIDNPTWRSVWDWG) the chain is on the cytoplasmic side. The chain crosses the membrane as a helical span at residues 123–142 (LFAGGFVPALVFGVAFGNLL). The Periplasmic segment spans residues 143-164 (QGVPFHFNELTQVTYTGSFFEL). The helical transmembrane segment at 165-184 (LNPFALLCGVISLSMLVTHG) threads the bilayer. The Cytoplasmic segment spans residues 185–205 (ANWLQMKTTEALRDRARTVSQ). The helical transmembrane segment at 206–224 (IGSIVTLIAFVLAGVWLYS) threads the bilayer. The Periplasmic portion of the chain corresponds to 225–261 (KDGYVVTSTIDHFAPSSPMNKEVAVETGAWFRNFNEM). The chain crosses the membrane as a helical span at residues 262-281 (PILWIFPALAVVAALLNAAF). The Cytoplasmic segment spans residues 282–291 (SKANRCGFAF). A helical membrane pass occupies residues 292–311 (FFSALTMAGVIITAAVSMFP). Residues 312 to 335 (FVMPSSSHPEQSLLMWDSTSSELT) are Periplasmic-facing. A helical transmembrane segment spans residues 336–355 (LTLMLIFAVVFVVIALAYTI). The Cytoplasmic segment spans residues 356 to 378 (WSYSKMFGRLDANFIDKNKHSLY).

It belongs to the cytochrome ubiquinol oxidase subunit 2 family. In terms of assembly, heterodimer of subunits I and II.

It is found in the cell inner membrane. Probable cytochrome oxidase subunit. This Haemophilus influenzae (strain ATCC 51907 / DSM 11121 / KW20 / Rd) protein is Probable cytochrome oxidase subunit 2.